Reading from the N-terminus, the 131-residue chain is MRRTFFKSKIHRATVTHADLDYEGSVSIDEDLLDASGILEYEAVHVWNITRGTRLQTYAIKGERGSGVICINGAAAHLNKPGDLVILATFAELDEAEARGFKPTVVLVDRKNKIVESDAVEIAGPARRVSA.

Residue serine 25 is the Schiff-base intermediate with substrate; via pyruvic acid of the active site. Serine 25 is subject to Pyruvic acid (Ser). Residue threonine 57 coordinates substrate. Catalysis depends on tyrosine 58, which acts as the Proton donor. 73–75 lines the substrate pocket; the sequence is GAA.

This sequence belongs to the PanD family. As to quaternary structure, heterooctamer of four alpha and four beta subunits. Requires pyruvate as cofactor. Is synthesized initially as an inactive proenzyme, which is activated by self-cleavage at a specific serine bond to produce a beta-subunit with a hydroxyl group at its C-terminus and an alpha-subunit with a pyruvoyl group at its N-terminus.

It is found in the cytoplasm. It carries out the reaction L-aspartate + H(+) = beta-alanine + CO2. It participates in cofactor biosynthesis; (R)-pantothenate biosynthesis; beta-alanine from L-aspartate: step 1/1. Its function is as follows. Catalyzes the pyruvoyl-dependent decarboxylation of aspartate to produce beta-alanine. This Anaeromyxobacter sp. (strain Fw109-5) protein is Aspartate 1-decarboxylase.